The chain runs to 495 residues: Catalase (495 aa).

The segment at 1 to 25 (MSNNKKLTSLFGAPVSDRENSMTAG) is disordered. Catalysis depends on residues His-55 and Asn-128. Tyr-338 is a heme binding site.

This sequence belongs to the catalase family. In terms of assembly, homodimer. It depends on heme as a cofactor.

The enzyme catalyses 2 H2O2 = O2 + 2 H2O. Decomposes hydrogen peroxide into water and oxygen; serves to protect cells from the toxic effects of hydrogen peroxide. The polypeptide is Catalase (katA) (Staphylococcus saprophyticus subsp. saprophyticus (strain ATCC 15305 / DSM 20229 / NCIMB 8711 / NCTC 7292 / S-41)).